The following is a 326-amino-acid chain: DNA polymerase III subunit delta' (326 aa).

In terms of assembly, DNA polymerase III contains a core (composed of alpha, epsilon and theta chains) that associates with a tau subunit. This core dimerizes to form the POLIII' complex. PolIII' associates with the gamma complex (composed of gamma, delta, delta', psi and chi chains) and with the beta chain to form the complete DNA polymerase III complex.

It catalyses the reaction DNA(n) + a 2'-deoxyribonucleoside 5'-triphosphate = DNA(n+1) + diphosphate. DNA polymerase III is a complex, multichain enzyme responsible for most of the replicative synthesis in bacteria. This DNA polymerase also exhibits 3' to 5' exonuclease activity. The sequence is that of DNA polymerase III subunit delta' (holB) from Buchnera aphidicola subsp. Acyrthosiphon pisum (strain APS) (Acyrthosiphon pisum symbiotic bacterium).